Reading from the N-terminus, the 365-residue chain is Probable caffeine synthase 4 (365 aa).

Y18 is a binding site for S-adenosyl-L-homocysteine. Position 25 (T25) interacts with caffeine. C61, N66, D98, L99, S134, and F135 together coordinate S-adenosyl-L-homocysteine. 3 residues coordinate caffeine: Y152, H155, and W156. N173, D259, F261, and N262 together coordinate Mg(2+). A caffeine-binding site is contributed by F317.

The protein belongs to the methyltransferase superfamily. Type-7 methyltransferase family. Requires Mg(2+) as cofactor.

It functions in the pathway alkaloid biosynthesis. May be involved in the biosynthesis of caffeine. The chain is Probable caffeine synthase 4 from Camellia sinensis (Tea plant).